We begin with the raw amino-acid sequence, 356 residues long: Protein-arginine kinase (356 aa).

Residues 24-256 (IIISSRVRVA…RQILAQEQAA (233 aa)) enclose the Phosphagen kinase C-terminal domain. ATP contacts are provided by residues 27-31 (SSRVR), H93, R127, 178-182 (RASVM), and 209-214 (RGLYGE). An RDXXRA motif of the pArg binding pocket involved in allosteric regulation motif is present at residues 339–344 (RDIFRA).

This sequence belongs to the ATP:guanido phosphotransferase family.

The catalysed reaction is L-arginyl-[protein] + ATP = N(omega)-phospho-L-arginyl-[protein] + ADP + H(+). Its activity is regulated as follows. Appears to be allosterically activated by the binding of pArg-containing polypeptides to the pArg-binding pocket localized in the C-terminal domain of McsB. Functionally, catalyzes the specific phosphorylation of arginine residues in proteins. The sequence is that of Protein-arginine kinase from Pelotomaculum thermopropionicum (strain DSM 13744 / JCM 10971 / SI).